Consider the following 536-residue polypeptide: Protein ST7 homolog (536 aa).

2 helical membrane passes run 3–23 (CSWTFLWLLWIALVAVLLFAL) and 49–69 (FYVALTGTSSLVSGIILIFEW). The stretch at 191 to 218 (LAEEESETVSQAENLLRRALRAIESTLN) forms a coiled coil. Residues 465 to 485 (TLMMLLQTFICLAICILAVLA) traverse the membrane as a helical segment.

Belongs to the ST7 family.

It is found in the membrane. The sequence is that of Protein ST7 homolog from Caenorhabditis elegans.